The chain runs to 243 residues: Glycerophosphodiester phosphodiesterase (243 aa).

Positions 3–239 constitute a GP-PDE domain; that stretch reads TLVIAHRGDS…DDPETLINLV (237 aa). Histidine 8 serves as the catalytic Proton acceptor. Residues glutamate 35 and aspartate 37 each contribute to the Ca(2+) site. Residue histidine 50 is the Proton donor of the active site. Glutamate 110 lines the Ca(2+) pocket.

The protein belongs to the glycerophosphoryl diester phosphodiesterase family. Homodimer. Mg(2+) serves as cofactor. The cofactor is Ca(2+).

The enzyme catalyses a sn-glycero-3-phosphodiester + H2O = an alcohol + sn-glycerol 3-phosphate + H(+). The catalysed reaction is sn-glycerol 3-phosphocholine + H2O = sn-glycerol 3-phosphate + choline + H(+). Its activity is regulated as follows. Inhibited by EDTA. In terms of biological role, glycerophosphodiester phosphodiesterase hydrolyzes glycerophosphodiesters into glycerol-3-phosphate (G3P) and the corresponding alcohol. Can use glycerophosphocholine. This chain is Glycerophosphodiester phosphodiesterase, found in Caldanaerobacter subterraneus subsp. tengcongensis (strain DSM 15242 / JCM 11007 / NBRC 100824 / MB4) (Thermoanaerobacter tengcongensis).